The following is a 413-amino-acid chain: Multifunctional CCA protein (413 aa).

2 residues coordinate ATP: Gly-8 and Arg-11. CTP-binding residues include Gly-8 and Arg-11. 2 residues coordinate Mg(2+): Asp-21 and Asp-23. Residues Arg-91, Arg-143, and Arg-146 each contribute to the ATP site. CTP contacts are provided by Arg-91, Arg-143, and Arg-146. The HD domain occupies 232-333 (TGVHVMMVVD…VRLFERSDAL (102 aa)).

It belongs to the tRNA nucleotidyltransferase/poly(A) polymerase family. Bacterial CCA-adding enzyme type 1 subfamily. As to quaternary structure, monomer. Can also form homodimers and oligomers. Mg(2+) is required as a cofactor. It depends on Ni(2+) as a cofactor.

It catalyses the reaction a tRNA precursor + 2 CTP + ATP = a tRNA with a 3' CCA end + 3 diphosphate. It carries out the reaction a tRNA with a 3' CCA end + 2 CTP + ATP = a tRNA with a 3' CCACCA end + 3 diphosphate. Catalyzes the addition and repair of the essential 3'-terminal CCA sequence in tRNAs without using a nucleic acid template. Adds these three nucleotides in the order of C, C, and A to the tRNA nucleotide-73, using CTP and ATP as substrates and producing inorganic pyrophosphate. tRNA 3'-terminal CCA addition is required both for tRNA processing and repair. Also involved in tRNA surveillance by mediating tandem CCA addition to generate a CCACCA at the 3' terminus of unstable tRNAs. While stable tRNAs receive only 3'-terminal CCA, unstable tRNAs are marked with CCACCA and rapidly degraded. In Burkholderia lata (strain ATCC 17760 / DSM 23089 / LMG 22485 / NCIMB 9086 / R18194 / 383), this protein is Multifunctional CCA protein.